The primary structure comprises 122 residues: Yop proteins translocation protein X (122 aa).

Positions 71-87 form a coiled coil; the sequence is HRAQDYRRELDTLQSLL.

In terms of assembly, interacts with YscY.

The protein localises to the secreted. In terms of biological role, required for Yop secretion. The chain is Yop proteins translocation protein X (yscX) from Yersinia enterocolitica serotype O:8 / biotype 1B (strain NCTC 13174 / 8081).